A 57-amino-acid chain; its full sequence is Large ribosomal subunit protein bL32c (57 aa).

As to quaternary structure, component of the chloroplast large ribosomal subunit (LSU). Mature 70S chloroplast ribosomes of higher plants consist of a small (30S) and a large (50S) subunit. The 30S small subunit contains 1 molecule of ribosomal RNA (16S rRNA) and 24 different proteins. The 50S large subunit contains 3 rRNA molecules (23S, 5S and 4.5S rRNA) and 33 different proteins.

Its subcellular location is the plastid. It is found in the chloroplast. Functionally, component of the chloroplast ribosome (chloro-ribosome), a dedicated translation machinery responsible for the synthesis of chloroplast genome-encoded proteins, including proteins of the transcription and translation machinery and components of the photosynthetic apparatus. The sequence is that of Large ribosomal subunit protein bL32c (rpl32) from Spinacia oleracea (Spinach).